Reading from the N-terminus, the 165-residue chain is MKSIYITGYMGAGKTTIGKVLSKELHMDVVDTDQKIEEKQEKAIRDIFAEEGEMAFREYESEMVRSLPVQNVIITTGGGIIERAENRKWMKENGTVVYLYCDPHVIAERLREDTTRPLFQKKDIDAFITKFESRRAYYEEADIHIDTTNKSVKQIMNELKQKINE.

11–16 (GAGKTT) is a binding site for ATP. A Mg(2+)-binding site is contributed by threonine 15. Substrate contacts are provided by aspartate 33, arginine 57, and glycine 78. Arginine 116 contributes to the ATP binding site. Substrate is bound at residue arginine 134.

The protein belongs to the shikimate kinase family. As to quaternary structure, monomer. The cofactor is Mg(2+).

It localises to the cytoplasm. The catalysed reaction is shikimate + ATP = 3-phosphoshikimate + ADP + H(+). It functions in the pathway metabolic intermediate biosynthesis; chorismate biosynthesis; chorismate from D-erythrose 4-phosphate and phosphoenolpyruvate: step 5/7. Functionally, catalyzes the specific phosphorylation of the 3-hydroxyl group of shikimic acid using ATP as a cosubstrate. This chain is Shikimate kinase, found in Bacillus mycoides (strain KBAB4) (Bacillus weihenstephanensis).